A 343-amino-acid polypeptide reads, in one-letter code: Vacuolar membrane protein Kpol_1003p17 (343 aa).

The interval 45 to 65 (TTDTSGTSTSSRDVSSGQSTL) is disordered. A helical transmembrane segment spans residues 101 to 121 (FIAVGSIIGGIFGGVLIWWMI). A disordered region spans residues 235–343 (EVLQQQRQRR…YLDDMLENDN (109 aa)). Positions 254-264 (ELPSTPPSNFK) are enriched in polar residues. A compositionally biased stretch (basic and acidic residues) spans 269 to 280 (KPERSASPERKS). Over residues 281 to 290 (RSPIRQHRKN) the composition is skewed to basic residues.

It belongs to the PRM5 family.

It is found in the vacuole membrane. In Vanderwaltozyma polyspora (strain ATCC 22028 / DSM 70294 / BCRC 21397 / CBS 2163 / NBRC 10782 / NRRL Y-8283 / UCD 57-17) (Kluyveromyces polysporus), this protein is Vacuolar membrane protein Kpol_1003p17.